Reading from the N-terminus, the 229-residue chain is Large ribosomal subunit protein uL1 (229 aa).

The protein belongs to the universal ribosomal protein uL1 family. As to quaternary structure, part of the 50S ribosomal subunit.

Its function is as follows. Binds directly to 23S rRNA. The L1 stalk is quite mobile in the ribosome, and is involved in E site tRNA release. Protein L1 is also a translational repressor protein, it controls the translation of the L11 operon by binding to its mRNA. In Clostridium kluyveri (strain ATCC 8527 / DSM 555 / NBRC 12016 / NCIMB 10680 / K1), this protein is Large ribosomal subunit protein uL1.